We begin with the raw amino-acid sequence, 126 residues long: Fluoride-specific ion channel FluC (126 aa).

Transmembrane regions (helical) follow at residues 6 to 26 (FVAV…FSVL), 36 to 56 (YGTL…VGFF), 69 to 89 (LAIT…SEVV), and 99 to 119 (WAAM…ALGL). 2 residues coordinate Na(+): glycine 76 and threonine 79.

The protein belongs to the fluoride channel Fluc/FEX (TC 1.A.43) family.

The protein localises to the cell inner membrane. It catalyses the reaction fluoride(in) = fluoride(out). With respect to regulation, na(+) is not transported, but it plays an essential structural role and its presence is essential for fluoride channel function. Functionally, fluoride-specific ion channel. Important for reducing fluoride concentration in the cell, thus reducing its toxicity. The chain is Fluoride-specific ion channel FluC from Cupriavidus taiwanensis (strain DSM 17343 / BCRC 17206 / CCUG 44338 / CIP 107171 / LMG 19424 / R1) (Ralstonia taiwanensis (strain LMG 19424)).